The chain runs to 132 residues: Gamma-crystallin-5 (132 aa).

The Beta/gamma crystallin 'Greek key' 2 domain maps to 1–40 (ILYEQPSYRGHQYYLWKGEYPDFQRWMGFNDSIRSCRMSP). Residues 41–45 (YHQGQ) are connecting peptide. Beta/gamma crystallin 'Greek key' domains follow at residues 46 to 86 (YKMR…NVFD) and 87 to 129 (GNWM…RRVH).

It belongs to the beta/gamma-crystallin family. Monomer.

Crystallins are the dominant structural components of the vertebrate eye lens. This Xenopus laevis (African clawed frog) protein is Gamma-crystallin-5 (cryg5).